The sequence spans 288 residues: NAD kinase (288 aa).

D70 serves as the catalytic Proton acceptor. NAD(+) is bound by residues 70 to 71, 144 to 145, R155, K172, D174, 185 to 190, and Q245; these read DG, ND, and TGYSLS.

This sequence belongs to the NAD kinase family. The cofactor is a divalent metal cation.

Its subcellular location is the cytoplasm. It catalyses the reaction NAD(+) + ATP = ADP + NADP(+) + H(+). Its function is as follows. Involved in the regulation of the intracellular balance of NAD and NADP, and is a key enzyme in the biosynthesis of NADP. Catalyzes specifically the phosphorylation on 2'-hydroxyl of the adenosine moiety of NAD to yield NADP. This is NAD kinase from Citrifermentans bemidjiense (strain ATCC BAA-1014 / DSM 16622 / JCM 12645 / Bem) (Geobacter bemidjiensis).